The following is a 108-amino-acid chain: Putative DNA-directed RNA polymerase subunit 1 inactive homolog (108 aa).

The polypeptide is Putative DNA-directed RNA polymerase subunit 1 inactive homolog (Acanthamoeba polyphaga (Amoeba)).